We begin with the raw amino-acid sequence, 390 residues long: DNA polymerase IV (390 aa).

The UmuC domain maps to 6–187; it reads VMHVDLDAFF…LDIAVMPGIG (182 aa). Residues Asp10 and Asp105 each coordinate Mg(2+). Glu106 is an active-site residue.

This sequence belongs to the DNA polymerase type-Y family. Monomer. Mg(2+) is required as a cofactor.

The protein localises to the cytoplasm. The catalysed reaction is DNA(n) + a 2'-deoxyribonucleoside 5'-triphosphate = DNA(n+1) + diphosphate. Poorly processive, error-prone DNA polymerase involved in untargeted mutagenesis. Copies undamaged DNA at stalled replication forks, which arise in vivo from mismatched or misaligned primer ends. These misaligned primers can be extended by PolIV. Exhibits no 3'-5' exonuclease (proofreading) activity. May be involved in translesional synthesis, in conjunction with the beta clamp from PolIII. This chain is DNA polymerase IV, found in Dehalococcoides mccartyi (strain CBDB1).